Here is a 144-residue protein sequence, read N- to C-terminus: Large ribosomal subunit protein uL15 (144 aa).

Residues 1–48 (MIKLESLQDPSPRKRRTKLLGRGPSSGHGKTSCRGHKGDGSRSGYKRR) form a disordered region.

Belongs to the universal ribosomal protein uL15 family. As to quaternary structure, part of the 50S ribosomal subunit.

Binds to the 23S rRNA. This chain is Large ribosomal subunit protein uL15, found in Chlamydia abortus (strain DSM 27085 / S26/3) (Chlamydophila abortus).